A 302-amino-acid polypeptide reads, in one-letter code: Recombination-associated protein RdgC (302 aa).

The protein belongs to the RdgC family.

Its subcellular location is the cytoplasm. It localises to the nucleoid. Functionally, may be involved in recombination. The sequence is that of Recombination-associated protein RdgC from Haemophilus influenzae (strain PittGG).